We begin with the raw amino-acid sequence, 92 residues long: Long neurotoxin 1 (92 aa).

Positions 1–21 (MKILLLTLVVVTIVCLDLAYT) are cleaved as a signal peptide. 5 disulfide bridges follow: cysteine 24-cysteine 41, cysteine 34-cysteine 62, cysteine 47-cysteine 51, cysteine 66-cysteine 77, and cysteine 78-cysteine 83.

It belongs to the three-finger toxin family. Long-chain subfamily. Type II alpha-neurotoxin sub-subfamily. In terms of tissue distribution, expressed by the venom gland.

The protein localises to the secreted. Its function is as follows. Binds with high affinity to muscular (alpha-1/CHRNA1) and neuronal (alpha-7/CHRNA7) nicotinic acetylcholine receptor (nAChR) and inhibits acetylcholine from binding to the receptor, thereby impairing neuromuscular and neuronal transmission. The chain is Long neurotoxin 1 from Hydrophis hardwickii (Hardwick's spine-bellied seasnake).